Reading from the N-terminus, the 216-residue chain is MFKIFNSDKNKTFKPKKGFSKGTKRHDLHKHAKATLGSGNLRLAVSLPEREDLNEWLAVNTVDFFNQINLLYGSITEFCTPKTCEVMSAGPKYEYLWADGESVKKPIKVSAPEYVEFLMTWVQGILDDENIFPSRVDVQFPKNFQSIVKNIFKRLFRVYGHIYYSHFTKIVSLGEEAHLNTCFKHFYFFIVEFNLVDKKEMLPLQDLIDNLTKSST.

Zn(2+)-binding residues include cysteine 79, cysteine 84, histidine 161, and histidine 166.

This sequence belongs to the MOB1/phocein family.

The protein is MOB kinase activator-like 1 homolog B (mobB) of Dictyostelium discoideum (Social amoeba).